The chain runs to 61 residues: UPF0312 protein (61 aa).

The protein belongs to the UPF0312 family.

This chain is UPF0312 protein, found in Delftia acidovorans (Pseudomonas acidovorans).